The sequence spans 176 residues: Crossover junction endodeoxyribonuclease RuvC (176 aa).

Catalysis depends on residues D8, E69, and D141. 3 residues coordinate Mg(2+): D8, E69, and D141.

It belongs to the RuvC family. Homodimer which binds Holliday junction (HJ) DNA. The HJ becomes 2-fold symmetrical on binding to RuvC with unstacked arms; it has a different conformation from HJ DNA in complex with RuvA. In the full resolvosome a probable DNA-RuvA(4)-RuvB(12)-RuvC(2) complex forms which resolves the HJ. Requires Mg(2+) as cofactor.

The protein localises to the cytoplasm. It carries out the reaction Endonucleolytic cleavage at a junction such as a reciprocal single-stranded crossover between two homologous DNA duplexes (Holliday junction).. Its function is as follows. The RuvA-RuvB-RuvC complex processes Holliday junction (HJ) DNA during genetic recombination and DNA repair. Endonuclease that resolves HJ intermediates. Cleaves cruciform DNA by making single-stranded nicks across the HJ at symmetrical positions within the homologous arms, yielding a 5'-phosphate and a 3'-hydroxyl group; requires a central core of homology in the junction. The consensus cleavage sequence is 5'-(A/T)TT(C/G)-3'. Cleavage occurs on the 3'-side of the TT dinucleotide at the point of strand exchange. HJ branch migration catalyzed by RuvA-RuvB allows RuvC to scan DNA until it finds its consensus sequence, where it cleaves and resolves the cruciform DNA. This is Crossover junction endodeoxyribonuclease RuvC from Pseudomonas syringae pv. tomato (strain ATCC BAA-871 / DC3000).